The following is a 344-amino-acid chain: GTP 3',8-cyclase (344 aa).

In terms of domain architecture, Radical SAM core spans 19 to 245 (PFGRAVTYLR…DIPYRTGGPA (227 aa)). Arg28 provides a ligand contact to GTP. [4Fe-4S] cluster-binding residues include Cys35 and Cys39. Tyr41 provides a ligand contact to S-adenosyl-L-methionine. [4Fe-4S] cluster is bound at residue Cys42. A GTP-binding site is contributed by Arg77. An S-adenosyl-L-methionine-binding site is contributed by Gly81. Thr111 lines the GTP pocket. Ser135 is a binding site for S-adenosyl-L-methionine. A GTP-binding site is contributed by Lys171. Residue Met205 participates in S-adenosyl-L-methionine binding. Residues Cys268 and Cys271 each contribute to the [4Fe-4S] cluster site. Residue 273-275 (RVR) coordinates GTP. Cys285 provides a ligand contact to [4Fe-4S] cluster.

It belongs to the radical SAM superfamily. MoaA family. Monomer and homodimer. It depends on [4Fe-4S] cluster as a cofactor.

The catalysed reaction is GTP + AH2 + S-adenosyl-L-methionine = (8S)-3',8-cyclo-7,8-dihydroguanosine 5'-triphosphate + 5'-deoxyadenosine + L-methionine + A + H(+). The protein operates within cofactor biosynthesis; molybdopterin biosynthesis. In terms of biological role, catalyzes the cyclization of GTP to (8S)-3',8-cyclo-7,8-dihydroguanosine 5'-triphosphate. The chain is GTP 3',8-cyclase from Brucella melitensis biotype 2 (strain ATCC 23457).